Consider the following 386-residue polypeptide: MEELDALLEELERSTLQDSDEYSNSAPLPLDQSSRKESNLDETSKMLSVQDSTNPFPVQLVYTTNIQDRNVYSEVQEPKKSPPPAKTSAAAQLDELMAHLSEMQAKVSVKADAGKKPVSENLDHKASLDSMLGGLEQELQNLGIPTVPKGHCASCQKPIVGKVIHALGQSWHPEHFICTHCKEEIGSSPFFERSGLAYCPKDYHHLFSPRCAYCAAPILDKVLTAMNQTWHPEHFFCSHCGEVFGTEGFHEKDKKPYCRKDFLAMFSPKCGGCNRPVLENYLSAMNTVWHPECFVCGDCFSSFSTGSFFELEGRPFCELHYHQRRGTLCHGCGQPITGRCISAMGHKFHPEHFVCAFCLTQLSKGVFREQNDKTYCQPCFNKLFSL.

Residue Met-1 is modified to N-acetylmethionine. The LD motif 1 signature appears at 3–15 (ELDALLEELERST). Positions 12–51 (ERSTLQDSDEYSNSAPLPLDQSSRKESNLDETSKMLSVQD) are disordered. Residues 16–26 (LQDSDEYSNSA) show a composition bias toward polar residues. Ser-19 carries the post-translational modification Phosphoserine. At Tyr-22 the chain carries Phosphotyrosine. The segment covering 33-44 (SSRKESNLDETS) has biased composition (basic and acidic residues). At Tyr-62 the chain carries Phosphotyrosine. 2 short sequence motifs (LD motif) span residues 70–82 (NVYS…KKSP) and 92–103 (QLDELMAHLSEM). Tyr-72 bears the Phosphotyrosine; by LYN mark. Ser-81 bears the Phosphoserine mark. LIM zinc-binding domains follow at residues 150–209 (GHCA…LFSP), 210–267 (RCAY…AMFS), 268–327 (PKCG…RRGT), and 328–386 (LCHG…LFSL).

This sequence belongs to the paxillin family. In terms of assembly, interacts with unphosphorylated ITGA4. Interacts with AR and SRF. Interacts with PTK2B/PYK2, PTPN22 and PTPN12. Interacts (via LD motif 3) with LYN and the interaction is induced upon B-cell antigen receptor (BCR) activation. Interacts (via LD motif 3) with PTK2/FAK. Post-translationally, phosphorylated on tyrosine residues. Phosphorylation on Tyr-72 is important for its inhibitory function. Bombesin stimulates phosphorylation on Tyr-22, Tyr-62 and Tyr-72.

Its subcellular location is the cytoplasm. It localises to the cell junction. The protein localises to the focal adhesion. The protein resides in the nucleus. It is found in the perinuclear region. Its subcellular location is the cell projection. It localises to the podosome. The protein localises to the cell membrane. Transcriptional coactivator for androgen receptor (AR) and serum response factor (SRF). Contributes to the regulation of cell adhesion, spreading and cell migration and acts as a negative regulator in integrin-mediated cell adhesion events. Suppresses the integrin-induced tyrosine phosphorylation of paxillin (PXN). May play a critical role as an adapter protein in the formation of the adhesion zone in osteoclasts. Negatively regulates B-cell antigen receptor (BCR) signaling. This chain is Leupaxin (LPXN), found in Oryctolagus cuniculus (Rabbit).